The chain runs to 529 residues: tRNA pseudouridine synthase Pus10 (529 aa).

Cysteine 21 and cysteine 24 together coordinate Zn(2+). The stretch at lysine 42 to glycine 89 forms a coiled coil. 2 positions are modified to phosphoserine: serine 79 and serine 84. Cysteine 109 and cysteine 112 together coordinate Zn(2+). Positions threonine 304–serine 317 are RNA binding forefinger loop. Aspartate 344 acts as the Nucleophile in catalysis. Residues glutamine 442–arginine 457 are RNA binding thumb loop.

This sequence belongs to the pseudouridine synthase Pus10 family. Interacts with components of the microprocessor complex DROSHA and DGCR8. Proteolytically cleaved during TRAIL-induced cell death. Cleaved, in vitro, either by caspase-3 (CASP3) or caspase-8 (CASP8).

The protein resides in the nucleus. It is found in the cytoplasm. The protein localises to the mitochondrion. The catalysed reaction is uridine(55) in tRNA = pseudouridine(55) in tRNA. The enzyme catalyses uridine(54) in tRNA = pseudouridine(54) in tRNA. Its function is as follows. Protein with different functions depending on its subcellular location: involved in miRNA processing in the nucleus and acts as a tRNA pseudouridylate synthase in the cytoplasm. In the cytoplasm, acts as a pseudouridylate synthase by catalyzing synthesis of pseudouridine(54) and pseudouridine(55) from uracil-54 and uracil-55, respectively, in the psi GC loop of a subset of tRNAs. tRNA pseudouridylate synthase activity is enhanced by the presence of 1-methyladenosine at position 53-61 of tRNAs. Does not show tRNA pseudouridylate synthase activity in the nucleus. In the nucleus, promotes primary microRNAs (pri-miRNAs) processing independently of its RNA pseudouridylate synthase activity. Binds pri-miRNAs. Modulator of TRAIL/TNFSF10-induced cell death via activation of procaspase-8 and BID cleavage. Required for the progression of the apoptotic signal through intrinsic mitochondrial cell death. This chain is tRNA pseudouridine synthase Pus10, found in Homo sapiens (Human).